Here is a 497-residue protein sequence, read N- to C-terminus: Zinc finger protein ZIC 2-B (497 aa).

2 disordered regions span residues 58 to 107 (HMGA…TSQA) and 143 to 180 (SAAAGGGQHGLFGPPAGSLHHHPHHHHQLSHGEHPQGH). Gly residues predominate over residues 66–88 (PGGGSGGGSGGGGGAGPNGGAGA). The span at 97–107 (PGQTSAFTSQA) shows a compositional bias: polar residues. Positions 161–171 (LHHHPHHHHQL) are enriched in basic residues. Residues 273-308 (LICKWIDPEQLNNPKKSCNKTFSTMHELVTHMSVEH) form a C2H2-type 1; atypical zinc finger. A C2H2-type 2; atypical zinc finger spans residues 317-344 (HICFWEECAREGKPFKAKYKLVNHIRVH). 3 consecutive C2H2-type zinc fingers follow at residues 350–374 (FPCPFPGCGKVFARSENLKIHKRTH), 380–404 (FQCEFEGCDRRFANSSDRKKHMHVH), and 410–432 (YLCKMCDKSYTHPSSLRKHMKVH). The tract at residues 423–473 (SSLRKHMKVHESSPQGSESSPAASSGYESSTPPGLVSPNSETQNPNLSPAA) is disordered. A compositionally biased stretch (low complexity) spans 434 to 452 (SSPQGSESSPAASSGYESS). Residues 459–469 (SPNSETQNPNL) are compositionally biased toward polar residues.

It belongs to the GLI C2H2-type zinc-finger protein family.

It localises to the nucleus. The protein resides in the cytoplasm. Functionally, transcriptional repressor that inhibits neurogenesis and induces neural and neural crest differentiation. Regulates anteroposterior patterning in early development by inhibiting expression of the nodal genes through the inhibition of vegt. Required for gastrulation movements and for proper anterior neural and axial development. May also act as a transcriptional activator. May bind to the minimal GLI-consensus sequence 5'-TGGGTGGTC-3'. This is Zinc finger protein ZIC 2-B (zic2-b) from Xenopus laevis (African clawed frog).